A 417-amino-acid polypeptide reads, in one-letter code: UPF0761 membrane protein Veis_3782 (417 aa).

6 helical membrane passes run 54–74 (ILAL…FPIF), 111–131 (GLGL…ILTI), 151–171 (VLIY…SLAL), 192–212 (FLFD…LYHY), 226–246 (GGLF…LYLG), and 261–281 (LPIL…GAVV).

This sequence belongs to the UPF0761 family.

It is found in the cell inner membrane. The protein is UPF0761 membrane protein Veis_3782 of Verminephrobacter eiseniae (strain EF01-2).